The following is a 369-amino-acid chain: Protein-glutamate methylesterase/protein-glutamine glutaminase 1 (369 aa).

A Response regulatory domain is found at 3–120; the sequence is KVVVVDDSAF…SLDIVKIEKD (118 aa). Aspartate 54 bears the 4-aspartylphosphate mark. Residues 136 to 168 are compositionally biased toward low complexity; the sequence is RSFRPAPAVRPAAPAALRATPRPSAAPSSAASS. The tract at residues 136–174 is disordered; the sequence is RSFRPAPAVRPAAPAALRATPRPSAAPSSAASSTGTLQV. The region spanning 177 to 369 is the CheB-type methylesterase domain; that stretch reads GKPVRDVVAI…AQAIMNAVYK (193 aa). Residues serine 189, histidine 216, and aspartate 312 contribute to the active site.

Belongs to the CheB family. Phosphorylated by CheA. Phosphorylation of the N-terminal regulatory domain activates the methylesterase activity.

Its subcellular location is the cytoplasm. The enzyme catalyses [protein]-L-glutamate 5-O-methyl ester + H2O = L-glutamyl-[protein] + methanol + H(+). It carries out the reaction L-glutaminyl-[protein] + H2O = L-glutamyl-[protein] + NH4(+). Its function is as follows. Involved in chemotaxis. Part of a chemotaxis signal transduction system that modulates chemotaxis in response to various stimuli. Catalyzes the demethylation of specific methylglutamate residues introduced into the chemoreceptors (methyl-accepting chemotaxis proteins or MCP) by CheR. Also mediates the irreversible deamidation of specific glutamine residues to glutamic acid. The polypeptide is Protein-glutamate methylesterase/protein-glutamine glutaminase 1 (Oleidesulfovibrio alaskensis (strain ATCC BAA-1058 / DSM 17464 / G20) (Desulfovibrio alaskensis)).